Here is a 425-residue protein sequence, read N- to C-terminus: Serine--tRNA ligase (425 aa).

230 to 232 (TAE) provides a ligand contact to L-serine. An ATP-binding site is contributed by 261–263 (RSE). E284 lines the L-serine pocket. 348–351 (EISS) contributes to the ATP binding site. S384 provides a ligand contact to L-serine.

It belongs to the class-II aminoacyl-tRNA synthetase family. Type-1 seryl-tRNA synthetase subfamily. As to quaternary structure, homodimer. The tRNA molecule binds across the dimer.

It is found in the cytoplasm. The enzyme catalyses tRNA(Ser) + L-serine + ATP = L-seryl-tRNA(Ser) + AMP + diphosphate + H(+). It carries out the reaction tRNA(Sec) + L-serine + ATP = L-seryl-tRNA(Sec) + AMP + diphosphate + H(+). It functions in the pathway aminoacyl-tRNA biosynthesis; selenocysteinyl-tRNA(Sec) biosynthesis; L-seryl-tRNA(Sec) from L-serine and tRNA(Sec): step 1/1. Catalyzes the attachment of serine to tRNA(Ser). Is also able to aminoacylate tRNA(Sec) with serine, to form the misacylated tRNA L-seryl-tRNA(Sec), which will be further converted into selenocysteinyl-tRNA(Sec). The protein is Serine--tRNA ligase of Streptococcus pyogenes serotype M49 (strain NZ131).